A 439-amino-acid polypeptide reads, in one-letter code: Phthalate 4,5-dioxygenase oxygenase subunit (439 aa).

Residues 27–134 form the Rieske domain; it reads WTPVCLLEEV…TREWGGFVWA (108 aa). Positions 70, 72, 89, and 92 each coordinate [2Fe-2S] cluster. Fe cation-binding residues include histidine 181 and histidine 186.

It belongs to the bacterial ring-hydroxylating dioxygenase alpha subunit family. As to quaternary structure, this dioxygenase system consists of two proteins: phthalate oxygenase and phthalate oxygenase reductase. [2Fe-2S] cluster is required as a cofactor. It depends on Fe cation as a cofactor.

It carries out the reaction phthalate + NADH + O2 + H(+) = cis-4,5-dihydroxycyclohexa-2,6-diene-1,2-dicarboxylate + NAD(+). It functions in the pathway xenobiotic degradation; phthalate degradation; 3,4-dihydroxybenzoate from phthalate: step 1/3. The polypeptide is Phthalate 4,5-dioxygenase oxygenase subunit (pht3) (Pseudomonas putida (Arthrobacter siderocapsulatus)).